The following is a 317-amino-acid chain: NADH kinase (317 aa).

Belongs to the NAD kinase family. Homodimer. In terms of tissue distribution, ubiquitous.

It localises to the cytoplasm. It carries out the reaction NADH + ATP = ADP + NADPH + H(+). Its activity is regulated as follows. Two-fold decrease in activity in the presence of PPi, iodoacetate or para-chloromercuribenzoate. Functionally, phosphorylates specifically NADH. Can phosphorylate NAD with a 100-fold decrease in efficiency compared to NADH. Prefers ATP as nucleoside triphosphate substrate. Can also utilize UTP, GTP and CTP. Key source of the cellular reductant NADPH which is an important antioxidant factor. In Arabidopsis thaliana (Mouse-ear cress), this protein is NADH kinase (NADK3).